Consider the following 363-residue polypeptide: Phospho-N-acetylmuramoyl-pentapeptide-transferase (363 aa).

10 helical membrane passes run 3–23, 55–75, 76–96, 116–136, 158–178, 190–210, 237–257, 261–281, 286–306, and 340–360; these read TVLIAGAFSLVVSLFGTPLYI, VVIILAALLAYGAAHLFTGAL, PTVSGLLVLLLMTGLGVVGFL, LAGQGLVGIVFAVLALQFPAA, LAVFGAVGGTVLFVVWALIIT, GLDGLATGATTMVLAAYVLIC, LAVVAAAVMGACFGFLWWNAS, IFMGDTGSLALGGALAGLAIL, ILLVLLGGLFVLITLSVILQV, and FWIIAGLFVFLGLGVFYAEWV.

It belongs to the glycosyltransferase 4 family. MraY subfamily. Mg(2+) is required as a cofactor.

The protein localises to the cell membrane. It carries out the reaction UDP-N-acetyl-alpha-D-muramoyl-L-alanyl-gamma-D-glutamyl-meso-2,6-diaminopimeloyl-D-alanyl-D-alanine + di-trans,octa-cis-undecaprenyl phosphate = di-trans,octa-cis-undecaprenyl diphospho-N-acetyl-alpha-D-muramoyl-L-alanyl-D-glutamyl-meso-2,6-diaminopimeloyl-D-alanyl-D-alanine + UMP. The protein operates within cell wall biogenesis; peptidoglycan biosynthesis. In terms of biological role, catalyzes the initial step of the lipid cycle reactions in the biosynthesis of the cell wall peptidoglycan: transfers peptidoglycan precursor phospho-MurNAc-pentapeptide from UDP-MurNAc-pentapeptide onto the lipid carrier undecaprenyl phosphate, yielding undecaprenyl-pyrophosphoryl-MurNAc-pentapeptide, known as lipid I. The chain is Phospho-N-acetylmuramoyl-pentapeptide-transferase from Kineococcus radiotolerans (strain ATCC BAA-149 / DSM 14245 / SRS30216).